The chain runs to 2594 residues: Protein sevenless (2594 aa).

2 disordered regions span residues 1 to 34 (MFWR…PKRL) and 49 to 92 (KMST…RVRR). Topologically, residues 1–2141 (MFWREDAAQQ…FVSPEKRGSL (2141 aa)) are extracellular. Positions 9-26 (QQQQQQQQQQQQQQQQQQ) are enriched in low complexity. N-linked (GlcNAc...) asparagine glycans are attached at residues Asn77, Asn401, Asn508, Asn532, Asn641, Asn667, Asn778, Asn797, Asn874, and Asn980. Fibronectin type-III domains are found at residues 358-462 (ETTQ…TPME) and 468-560 (APII…SPLE). One can recognise a Fibronectin type-III 3 domain in the interval 838–938 (PPAPRELRAL…APLATRTWPL (101 aa)). One copy of the LDL-receptor class B repeat lies at 1024–1066 (GLLYWTDLARDCVQRLDPFSGERELLPIFGARHLALDSAQGHL). Fibronectin type-III domains lie at 1227-1317 (LAVP…QLDT) and 1324-1430 (QPRR…VQSV). Asn1257, Asn1344, Asn1382, Asn1577, Asn1587, Asn1665, Asn1752, Asn1776, Asn1824, Asn1908, Asn1966, and Asn2088 each carry an N-linked (GlcNAc...) asparagine glycan. 4 Fibronectin type-III domains span residues 1711-1814 (TAAA…TLHT), 1821-1920 (APRN…SYAP), 1922-2010 (PPLQ…TLGD), and 2014-2132 (APGR…AEPF). The helical transmembrane segment at 2142–2162 (VLAIIAPAAIVSSCVLALVLV) threads the bilayer. The Cytoplasmic segment spans residues 2163–2594 (RKLQKRRHRA…LYANEGISGL (432 aa)). The Protein kinase domain occupies 2224 to 2495 (LTLLRFLGSG…KRCLSTLQAL (272 aa)). ATP is bound by residues 2230–2238 (LGSGAFGEV) and Lys2257. The Proton acceptor role is filled by Asp2355. The residue at position 2391 (Tyr2391) is a Phosphotyrosine; by autocatalysis. The segment at 2543–2568 (TVSTTDADTTGSPTTPTAPTTPTTTT) is disordered. Positions 2545–2568 (STTDADTTGSPTTPTAPTTPTTTT) are enriched in low complexity.

This sequence belongs to the protein kinase superfamily. Tyr protein kinase family. Insulin receptor subfamily.

Its subcellular location is the cell membrane. The catalysed reaction is L-tyrosyl-[protein] + ATP = O-phospho-L-tyrosyl-[protein] + ADP + H(+). Receptor for an extracellular signal required to instruct a cell to differentiate into a R7 photoreceptor. The ligand for Sev is the Boss (Bride of Sevenless) protein. This chain is Protein sevenless (sev), found in Drosophila virilis (Fruit fly).